The following is a 44-amino-acid chain: Photosystem I reaction center subunit IX (44 aa).

The helical transmembrane segment at Tyr-7 to Ile-27 threads the bilayer.

It belongs to the PsaJ family.

Its subcellular location is the plastid. The protein resides in the chloroplast thylakoid membrane. Its function is as follows. May help in the organization of the PsaE and PsaF subunits. This is Photosystem I reaction center subunit IX from Piper cenocladum (Ant piper).